Consider the following 86-residue polypeptide: Small ribosomal subunit protein bS20 (86 aa).

The segment at 1–25 (MANIKSQQKRNKTNERARLRNKSVK) is disordered.

This sequence belongs to the bacterial ribosomal protein bS20 family.

Functionally, binds directly to 16S ribosomal RNA. In Mycobacterium avium (strain 104), this protein is Small ribosomal subunit protein bS20.